The sequence spans 125 residues: Protein ApaG (125 aa).

Positions 1–125 constitute an ApaG domain; the sequence is MIEQPRICVQ…FRLAIPALIH (125 aa).

The chain is Protein ApaG from Yersinia pseudotuberculosis serotype IB (strain PB1/+).